The primary structure comprises 649 residues: Nitrosuccinic acid synthase npaA (649 aa).

It belongs to the nitrosuccinic acid synthase family. FAD serves as cofactor.

It catalyses the reaction L-aspartate + 3 NADPH + 3 O2 + 2 H(+) = 2-nitrobutanedioate + 3 NADP(+) + 4 H2O. It functions in the pathway mycotoxin biosynthesis. Functionally, nitrosuccinic acid synthase; part of the gene cluster that mediates the biosynthesis of the deadly neurotoxic nitroalkane 3-nitropropanoic acid (3-NPA) that acts as an antimetabolite of succinate and irreversibly inhibits succinate dehydrogenase and disrupts mitochondrial oxidative phosphorylation. NpaA catalyzes the iterative oxidation of L-aspartic acid to nitrosuccinic acid (2-nitrobutanedioate). Alternative amino acid substrates such as L-glutamate and D-aspartate are not accepted by npaA as a substrate, showing the strict substrate specificity toward L-aspartate. The nitrosuccinic acid decarboxylase npaB then facilitates decarboxylation of Nitrosuccinic acid to produce 3-NPA. The sequence is that of Nitrosuccinic acid synthase npaA from Aspergillus oryzae (strain ATCC 42149 / RIB 40) (Yellow koji mold).